Reading from the N-terminus, the 421-residue chain is Cytochrome c biogenesis protein Ccs1 (421 aa).

Transmembrane regions (helical) follow at residues 12 to 32 (LRFAISILLIIASCSVIGTVI), 71 to 91 (TWWFLGFIALFGLSLFTCTIL), and 157 to 177 (IAPIIVHFSMILILIGAIFGA).

It belongs to the Ccs1/CcsB family. As to quaternary structure, may interact with CcsA.

The protein localises to the plastid. Its subcellular location is the chloroplast thylakoid membrane. In terms of biological role, required during biogenesis of c-type cytochromes (cytochrome c6 and cytochrome f) at the step of heme attachment. This Trieres chinensis (Marine centric diatom) protein is Cytochrome c biogenesis protein Ccs1.